The chain runs to 252 residues: Aspartate/glutamate leucyltransferase (252 aa).

This sequence belongs to the R-transferase family. Bpt subfamily.

The protein localises to the cytoplasm. It carries out the reaction N-terminal L-glutamyl-[protein] + L-leucyl-tRNA(Leu) = N-terminal L-leucyl-L-glutamyl-[protein] + tRNA(Leu) + H(+). The catalysed reaction is N-terminal L-aspartyl-[protein] + L-leucyl-tRNA(Leu) = N-terminal L-leucyl-L-aspartyl-[protein] + tRNA(Leu) + H(+). Functionally, functions in the N-end rule pathway of protein degradation where it conjugates Leu from its aminoacyl-tRNA to the N-termini of proteins containing an N-terminal aspartate or glutamate. The chain is Aspartate/glutamate leucyltransferase from Afipia carboxidovorans (strain ATCC 49405 / DSM 1227 / KCTC 32145 / OM5) (Oligotropha carboxidovorans).